A 576-amino-acid chain; its full sequence is Proline--tRNA ligase (576 aa).

It belongs to the class-II aminoacyl-tRNA synthetase family. ProS type 1 subfamily. Homodimer.

It localises to the cytoplasm. The enzyme catalyses tRNA(Pro) + L-proline + ATP = L-prolyl-tRNA(Pro) + AMP + diphosphate. Functionally, catalyzes the attachment of proline to tRNA(Pro) in a two-step reaction: proline is first activated by ATP to form Pro-AMP and then transferred to the acceptor end of tRNA(Pro). As ProRS can inadvertently accommodate and process non-cognate amino acids such as alanine and cysteine, to avoid such errors it has two additional distinct editing activities against alanine. One activity is designated as 'pretransfer' editing and involves the tRNA(Pro)-independent hydrolysis of activated Ala-AMP. The other activity is designated 'posttransfer' editing and involves deacylation of mischarged Ala-tRNA(Pro). The misacylated Cys-tRNA(Pro) is not edited by ProRS. This is Proline--tRNA ligase from Leptospira interrogans serogroup Icterohaemorrhagiae serovar Lai (strain 56601).